We begin with the raw amino-acid sequence, 200 residues long: MARCKS-related protein (200 aa).

The tract at residues 1-200 (MGSQSSKAPR…PTPASAEQNE (200 aa)) is disordered. G2 carries N-myristoyl glycine lipidation. Residue T14 is modified to Phosphothreonine. Low complexity predominate over residues 16-26 (EEAAGASPAKA). A phosphoserine mark is found at S22, S36, and S48. Low complexity predominate over residues 53–64 (GTDEAAGATGDA). A Phosphoserine modification is found at S71. A compositionally biased stretch (basic and acidic residues) spans 74 to 85 (AEAKGEVAPKET). Position 85 is a phosphothreonine (T85). Positions 86–98 (PKKKKKFSFKKPF) are enriched in basic residues. The segment at 87-110 (KKKKKFSFKKPFKLSGLSFKRNRK) is effector domain involved in lipid-binding and calmodulin-binding. Phosphoserine; by PKC occurs at positions 93, 101, and 104. Phosphoserine is present on S119. The residue at position 120 (S120) is a Phosphoserine; by MAPK8. S132 and S135 each carry phosphoserine. The residue at position 148 (T148) is a Phosphothreonine; by MAPK8. Phosphoserine occurs at positions 151, 162, and 165. A compositionally biased stretch (low complexity) spans 156 to 165 (AKGAEASAAS). T170 is modified (phosphothreonine). The span at 178 to 200 (AAEPSTPSGPESGPTPASAEQNE) shows a compositional bias: low complexity. T183 is subject to Phosphothreonine; by MAPK8. T192 is modified (phosphothreonine).

Belongs to the MARCKS family. Binds to filamentous actin (F-actin), but not to monomeric G-actin, independently of its phosphorylation status. Interacts with calmodulin. In terms of processing, phosphorylated. Phosphorylation at Ser-120 and Thr-183 is non-redundantly catalyzed by MAPK8 in vivo. Phosphorylation at Thr-148 is preferentially catalyzed by MAPK8 in vivo, but this modification can also be catalyzed by other kinases in the absence of MAPK8. May be phosphorylated by protein kinase C, which disrupts the interaction with calmodulin. In terms of tissue distribution, expressed at high levels in brain cortex and hippocampus, including dentate gyrus, anterior olfactory nucleus, primary olfactory cortex, entorhinal cortex, medial preoptic area and dorsomedial hypothalamic nucleus (at protein level). Expressed in neuronal cells (at protein level). Detected in the retina. Strongly expressed in testis and uterus; expressed at lower levels in cerebellum, cerebrum, adipose tissue, spleen, kidney, thyroid, liver, lung, skeletal muscle and heart. Detected in T-cells and B-cells.

The protein resides in the cytoplasm. It is found in the cytoskeleton. It localises to the cell membrane. In terms of biological role, involved in the control of cell movement by regulating actin cytoskeleton homeostasis and filopodium and lamellipodium formation. When unphosphorylated, induces cell migration. When phosphorylated by MAPK8, induces actin bundles formation and stabilization, thereby reducing actin plasticity, hence restricting cell movement, including neuronal migration. May be involved in coupling the protein kinase C and calmodulin signal transduction systems. The chain is MARCKS-related protein (Marcksl1) from Mus musculus (Mouse).